We begin with the raw amino-acid sequence, 85 residues long: Conotoxin Mi15b (85 aa).

Positions 1 to 23 (MEKLTVLILVAIVLLTIQVLGQS) are cleaved as a signal peptide. The propeptide occupies 24 to 49 (DRDKHPKRRPRQYATKRLSALMKGHR). At Gln-50 the chain carries Pyrrolidone carboxylic acid.

The protein belongs to the conotoxin O2 superfamily. Post-translationally, contains 4 disulfide bonds. In terms of tissue distribution, expressed by the venom duct.

Its subcellular location is the secreted. The sequence is that of Conotoxin Mi15b from Conus miles (Soldier cone).